We begin with the raw amino-acid sequence, 868 residues long: Leucine--tRNA ligase (868 aa).

The 'HIGH' region motif lies at 42-52 (PYPSGKLHMGH). Positions 627 to 631 (KMSKS) match the 'KMSKS' region motif. Lys630 contacts ATP.

This sequence belongs to the class-I aminoacyl-tRNA synthetase family.

Its subcellular location is the cytoplasm. It catalyses the reaction tRNA(Leu) + L-leucine + ATP = L-leucyl-tRNA(Leu) + AMP + diphosphate. This chain is Leucine--tRNA ligase, found in Pseudomonas putida (strain ATCC 47054 / DSM 6125 / CFBP 8728 / NCIMB 11950 / KT2440).